The sequence spans 31 residues: Cyclotide cter-J (31 aa).

Positions 1-31 (GTVPCGESCVFIPCITGIAGCSCKNKVCYID) form a cross-link, cyclopeptide (Gly-Asp). 3 disulfides stabilise this stretch: Cys5/Cys21, Cys9/Cys23, and Cys14/Cys28.

Post-translationally, contains 3 disulfide bonds. In terms of processing, this is a cyclic peptide.

Functionally, probably participates in a plant defense mechanism. This chain is Cyclotide cter-J, found in Clitoria ternatea (Butterfly pea).